A 227-amino-acid polypeptide reads, in one-letter code: 7-cyano-7-deazaguanine synthase (227 aa).

7 to 17 contacts ATP; the sequence is VSGGMDSLVAT. Cysteine 187, cysteine 195, cysteine 198, and cysteine 201 together coordinate Zn(2+).

It belongs to the QueC family. The cofactor is Zn(2+).

It catalyses the reaction 7-carboxy-7-deazaguanine + NH4(+) + ATP = 7-cyano-7-deazaguanine + ADP + phosphate + H2O + H(+). It participates in purine metabolism; 7-cyano-7-deazaguanine biosynthesis. Functionally, catalyzes the ATP-dependent conversion of 7-carboxy-7-deazaguanine (CDG) to 7-cyano-7-deazaguanine (preQ(0)). In Chlorobaculum tepidum (strain ATCC 49652 / DSM 12025 / NBRC 103806 / TLS) (Chlorobium tepidum), this protein is 7-cyano-7-deazaguanine synthase.